The following is a 595-amino-acid chain: Beta-hexosaminidase 1 (595 aa).

A signal peptide spans 1 to 20 (MRFAYLATLAGSLLAGLAQA). N-linked (GlcNAc...) asparagine glycosylation is present at Asn-313.

Belongs to the glycosyl hydrolase 20 family.

It carries out the reaction Hydrolysis of terminal non-reducing N-acetyl-D-hexosamine residues in N-acetyl-beta-D-hexosaminides.. Its function is as follows. Beta-hexosaminidase that shows a broad substrate specificity. This chain is Beta-hexosaminidase 1, found in Coccidioides posadasii (strain RMSCC 757 / Silveira) (Valley fever fungus).